Reading from the N-terminus, the 258-residue chain is Acetylglutamate kinase (258 aa).

Substrate contacts are provided by residues 41–42 (GG), Arg63, and Asn156.

This sequence belongs to the acetylglutamate kinase family. ArgB subfamily.

It is found in the cytoplasm. It catalyses the reaction N-acetyl-L-glutamate + ATP = N-acetyl-L-glutamyl 5-phosphate + ADP. It functions in the pathway amino-acid biosynthesis; L-arginine biosynthesis; N(2)-acetyl-L-ornithine from L-glutamate: step 2/4. Catalyzes the ATP-dependent phosphorylation of N-acetyl-L-glutamate. This Bacillus velezensis (strain DSM 23117 / BGSC 10A6 / LMG 26770 / FZB42) (Bacillus amyloliquefaciens subsp. plantarum) protein is Acetylglutamate kinase.